Reading from the N-terminus, the 555-residue chain is CTP synthase (555 aa).

The tract at residues 1-277 (MPKEPETEYD…DQHVMERLNV (277 aa)) is amidoligase domain. Ser26 is a CTP binding site. Ser26 contributes to the UTP binding site. Position 27–32 (27–32 (GLGKGI)) interacts with ATP. Tyr67 lines the L-glutamine pocket. Asp84 serves as a coordination point for ATP. Mg(2+) is bound by residues Asp84 and Glu152. CTP contacts are provided by residues 159–161 (DIE), 198–203 (KTKPTQ), and Lys234. Residues 198–203 (KTKPTQ) and Lys234 each bind UTP. One can recognise a Glutamine amidotransferase type-1 domain in the interval 307-542 (LVGKYDLEDA…LKSVDSTLDA (236 aa)). Position 364 (Gly364) interacts with L-glutamine. Catalysis depends on Cys391, which acts as the Nucleophile; for glutamine hydrolysis. Residues 392–395 (LGFQ), Glu415, and Arg472 contribute to the L-glutamine site. Catalysis depends on residues His515 and Glu517.

Belongs to the CTP synthase family. In terms of assembly, homotetramer.

It carries out the reaction UTP + L-glutamine + ATP + H2O = CTP + L-glutamate + ADP + phosphate + 2 H(+). The enzyme catalyses L-glutamine + H2O = L-glutamate + NH4(+). The catalysed reaction is UTP + NH4(+) + ATP = CTP + ADP + phosphate + 2 H(+). The protein operates within pyrimidine metabolism; CTP biosynthesis via de novo pathway; CTP from UDP: step 2/2. Its activity is regulated as follows. Allosterically activated by GTP, when glutamine is the substrate; GTP has no effect on the reaction when ammonia is the substrate. The allosteric effector GTP functions by stabilizing the protein conformation that binds the tetrahedral intermediate(s) formed during glutamine hydrolysis. Inhibited by the product CTP, via allosteric rather than competitive inhibition. Functionally, catalyzes the ATP-dependent amination of UTP to CTP with either L-glutamine or ammonia as the source of nitrogen. Regulates intracellular CTP levels through interactions with the four ribonucleotide triphosphates. The chain is CTP synthase from Haloquadratum walsbyi (strain DSM 16790 / HBSQ001).